The sequence spans 1044 residues: Isoleucine--tRNA ligase (1044 aa).

A 'HIGH' region motif is present at residues 48 to 58 (PFATGLPHFGH). The 'KMSKS' region signature appears at 594 to 598 (KMSKS). Lys-597 lines the ATP pocket.

It belongs to the class-I aminoacyl-tRNA synthetase family. IleS type 2 subfamily. Monomer. It depends on Zn(2+) as a cofactor.

Its subcellular location is the cytoplasm. It carries out the reaction tRNA(Ile) + L-isoleucine + ATP = L-isoleucyl-tRNA(Ile) + AMP + diphosphate. Its function is as follows. Catalyzes the attachment of isoleucine to tRNA(Ile). As IleRS can inadvertently accommodate and process structurally similar amino acids such as valine, to avoid such errors it has two additional distinct tRNA(Ile)-dependent editing activities. One activity is designated as 'pretransfer' editing and involves the hydrolysis of activated Val-AMP. The other activity is designated 'posttransfer' editing and involves deacylation of mischarged Val-tRNA(Ile). This Borrelia duttonii (strain Ly) protein is Isoleucine--tRNA ligase.